Reading from the N-terminus, the 167-residue chain is uncharacterized protein (167 aa).

4 consecutive transmembrane segments (helical) span residues Leu-13–Ile-33, Val-37–Tyr-57, Trp-61–Glu-81, and Leu-103–Ser-123.

It is found in the cell membrane. This is an uncharacterized protein from Haemophilus influenzae (strain ATCC 51907 / DSM 11121 / KW20 / Rd).